We begin with the raw amino-acid sequence, 78 residues long: Acyl carrier protein (78 aa).

Residues 2–77 enclose the Carrier domain; sequence SNLEERVKKI…AAIDYVTANA (76 aa). Ser-37 carries the O-(pantetheine 4'-phosphoryl)serine modification.

This sequence belongs to the acyl carrier protein (ACP) family. In terms of processing, 4'-phosphopantetheine is transferred from CoA to a specific serine of apo-ACP by AcpS. This modification is essential for activity because fatty acids are bound in thioester linkage to the sulfhydryl of the prosthetic group.

It is found in the cytoplasm. It participates in lipid metabolism; fatty acid biosynthesis. Carrier of the growing fatty acid chain in fatty acid biosynthesis. This is Acyl carrier protein from Vibrio vulnificus (strain CMCP6).